Here is an 894-residue protein sequence, read N- to C-terminus: Mitogen-activated protein kinase kinase kinase kinase 3 (894 aa).

The residue at position 1 (Met-1) is an N-acetylmethionine. A Protein kinase domain is found at 16–273; it reads FELIQRIGSG…AEKLLQHPFV (258 aa). ATP-binding positions include 22 to 30 and Lys-45; that span reads IGSGTYGDV. The Proton acceptor role is filled by Asp-136. Position 329 is a phosphoserine (Ser-329). The tract at residues 339–358 is disordered; the sequence is DPPLRKETEPHHELPDSDGF. Positions 340–353 are enriched in basic and acidic residues; sequence PPLRKETEPHHELP. Residue Ser-398 is modified to Phosphoserine. The segment at 408 to 537 is disordered; that stretch reads HVAHLEDDEG…VPKPISNGLP (130 aa). Positions 473 to 487 are enriched in pro residues; the sequence is HVPPRPPPPRLPPQK. The span at 508–520 shows a compositional bias: polar residues; sequence LYQQQSEQRGTNL. The CNH domain maps to 556-867; it reads PLKIHCATSW…IFRLLGSDRV (312 aa).

It belongs to the protein kinase superfamily. STE Ser/Thr protein kinase family. STE20 subfamily. In terms of assembly, interacts with SH3GL2. Interaction appears to regulate MAP4K3-mediated JNK activation. Mg(2+) serves as cofactor.

The catalysed reaction is L-seryl-[protein] + ATP = O-phospho-L-seryl-[protein] + ADP + H(+). The enzyme catalyses L-threonyl-[protein] + ATP = O-phospho-L-threonyl-[protein] + ADP + H(+). In terms of biological role, serine/threonine kinase that plays a role in the response to environmental stress. Appears to act upstream of the JUN N-terminal pathway. Activator of the Hippo signaling pathway which plays a pivotal role in organ size control and tumor suppression by restricting proliferation and promoting apoptosis. MAP4Ks act in parallel to and are partially redundant with STK3/MST2 and STK4/MST2 in the phosphorylation and activation of LATS1/2, and establish MAP4Ks as components of the expanded Hippo pathway. This Mus musculus (Mouse) protein is Mitogen-activated protein kinase kinase kinase kinase 3 (Map4k3).